A 145-amino-acid polypeptide reads, in one-letter code: D-aminoacyl-tRNA deacylase (145 aa).

A Gly-cisPro motif, important for rejection of L-amino acids motif is present at residues Gly137–Pro138.

This sequence belongs to the DTD family. Homodimer.

It is found in the cytoplasm. The catalysed reaction is glycyl-tRNA(Ala) + H2O = tRNA(Ala) + glycine + H(+). It carries out the reaction a D-aminoacyl-tRNA + H2O = a tRNA + a D-alpha-amino acid + H(+). Its function is as follows. An aminoacyl-tRNA editing enzyme that deacylates mischarged D-aminoacyl-tRNAs. Also deacylates mischarged glycyl-tRNA(Ala), protecting cells against glycine mischarging by AlaRS. Acts via tRNA-based rather than protein-based catalysis; rejects L-amino acids rather than detecting D-amino acids in the active site. By recycling D-aminoacyl-tRNA to D-amino acids and free tRNA molecules, this enzyme counteracts the toxicity associated with the formation of D-aminoacyl-tRNA entities in vivo and helps enforce protein L-homochirality. The protein is D-aminoacyl-tRNA deacylase of Limosilactobacillus fermentum (strain NBRC 3956 / LMG 18251) (Lactobacillus fermentum).